The primary structure comprises 86 residues: Protein P17 (86 aa).

The disordered stretch occupies residues Ser63–Gln86.

In terms of assembly, homotetramer.

Functionally, assembly protein that acts late in phage assembly, after capsid protein folding and multimerization, and sorting of membrane proteins has occurred. The major coat protein P3 and two assembly factors (P10 and P17) are needed during the assembly of the virus particle inside the host cell, when the capsid protein multimers are capable of enclosing the host-derived membrane, containing the virus-encoded membrane-associated proteins. This chain is Protein P17 (XVII), found in Enterobacteria phage PRD1 (Bacteriophage PRD1).